Reading from the N-terminus, the 240-residue chain is uncharacterized protein (240 aa).

Over residues 1–11 (MGMTPRRKRRG) the composition is skewed to basic residues. The disordered stretch occupies residues 1-32 (MGMTPRRKRRGGAVQITRPTGRPRTPTTQTTK). Residues 17–31 (TRPTGRPRTPTTQTT) show a composition bias toward low complexity. The next 6 membrane-spanning stretches (helical) occupy residues 36-56 (WVVGGTTILTFVALLYLVELI), 93-113 (LMANTIPLLVLGFLMTLAGLS), 115-135 (FVWATAIIWILGGLGTWLIGN), 146-166 (IGASGLIFGWLAFLLVFGLFV), 172-192 (IVIGLVVLFVYGGILLGAMPV), and 198-218 (GVSWQGHLSGAVAGVVAAYLL).

The protein to M.leprae ML1171.

Its subcellular location is the cell membrane. This is an uncharacterized protein from Mycobacterium tuberculosis (strain CDC 1551 / Oshkosh).